The chain runs to 269 residues: Putative pyruvate, phosphate dikinase regulatory protein (269 aa).

Residue glycine 147–threonine 154 participates in ADP binding.

Belongs to the pyruvate, phosphate/water dikinase regulatory protein family. PDRP subfamily.

The catalysed reaction is N(tele)-phospho-L-histidyl/L-threonyl-[pyruvate, phosphate dikinase] + ADP = N(tele)-phospho-L-histidyl/O-phospho-L-threonyl-[pyruvate, phosphate dikinase] + AMP + H(+). It carries out the reaction N(tele)-phospho-L-histidyl/O-phospho-L-threonyl-[pyruvate, phosphate dikinase] + phosphate + H(+) = N(tele)-phospho-L-histidyl/L-threonyl-[pyruvate, phosphate dikinase] + diphosphate. Bifunctional serine/threonine kinase and phosphorylase involved in the regulation of the pyruvate, phosphate dikinase (PPDK) by catalyzing its phosphorylation/dephosphorylation. In Clostridium botulinum (strain ATCC 19397 / Type A), this protein is Putative pyruvate, phosphate dikinase regulatory protein.